Reading from the N-terminus, the 209-residue chain is Large ribosomal subunit protein uL3 (209 aa).

The disordered stretch occupies residues 118–150; the sequence is GFQGAIKRHGQSRGPMTHGSRYHRRPGSMGPVD.

Belongs to the universal ribosomal protein uL3 family. In terms of assembly, part of the 50S ribosomal subunit. Forms a cluster with proteins L14 and L19.

One of the primary rRNA binding proteins, it binds directly near the 3'-end of the 23S rRNA, where it nucleates assembly of the 50S subunit. The sequence is that of Large ribosomal subunit protein uL3 from Bacillus pumilus (strain SAFR-032).